Consider the following 218-residue polypeptide: Small ribosomal subunit protein uS3c (218 aa).

The KH type-2 domain occupies 43–118 (IKNYVQKNPR…RLNIAIARIS (76 aa)).

It belongs to the universal ribosomal protein uS3 family. In terms of assembly, part of the 30S ribosomal subunit.

Its subcellular location is the plastid. The protein localises to the chloroplast. This chain is Small ribosomal subunit protein uS3c (rps3), found in Acorus calamus (Sweet flag).